We begin with the raw amino-acid sequence, 765 residues long: Transcription factor SKN7 (765 aa).

Residues M1–D42 are disordered. The segment covering Q11–Q35 has biased composition (low complexity). Positions S40 to P145 are DNA-binding domain. The stretch at F157–E198 forms a coiled coil. The segment at S160–L220 is hydrophobic repeat HR-A/B. The disordered stretch occupies residues S371–M391. A Response regulatory domain is found at R398–L514. At D449 the chain carries 4-aspartylphosphate. The tract at residues T542–Q765 is transactivation domain. Positions V550–G564 are enriched in gly residues. 2 disordered regions span residues V550 to L647 and P686 to Q765. Residues A569–Q584 are compositionally biased toward low complexity. The span at Q626–P636 shows a compositional bias: pro residues. Low complexity-rich tracts occupy residues S637–L647 and G699–R715. Positions H755–Q765 are enriched in gly residues.

The protein belongs to the SKN7 family. In terms of assembly, homotrimer.

The protein localises to the nucleus. Functionally, transcription factor that is part of a SLN1-YPD1-SKN7 two-component regulatory system, which controls gene expression in response to changes in the osmolarity of the extracellular environment. Under low osmotic conditions, phosphorylated and activated by the phosphorelay intermediate protein YPD1. Also activated in response to oxidative stress, independent on the two-component regulatory system. Regulates heat shock genes in response to oxidative stress and genes involved in cell wall integrity in response to osmotic changes. The sequence is that of Transcription factor SKN7 from Chaetomium thermophilum (strain DSM 1495 / CBS 144.50 / IMI 039719) (Thermochaetoides thermophila).